We begin with the raw amino-acid sequence, 1055 residues long: Inactive exonuclease DIS3L2 (1055 aa).

Disordered regions lie at residues 1 to 109 (MKSA…SSPE) and 229 to 249 (SAAK…KARQ). Over residues 17–32 (HKKKRNRPQKQNRRSK) the composition is skewed to basic residues. Positions 39–59 (EDAHVEESLDGRDSSRSKAKD) are enriched in basic and acidic residues. Low complexity predominate over residues 97 to 108 (PRRSASPLLSSP). Positions 367–446 (YVQLMPADPR…PQINAILYQN (80 aa)) constitute a CSD2 domain. In terms of domain architecture, RNB spans 476 to 824 (RKDLRDLCVL…VHRALAAALE (349 aa)). Residues Asp-488 and Asp-497 each contribute to the Mg(2+) site.

Belongs to the RNR ribonuclease family. DIS3L2 subfamily.

The protein localises to the cytoplasm. Probable inactive 3'-5'-exoribonuclease. Is unable to complement the growth defect of a yeast mutant lacking RRP44 exonuclease. The protein is Inactive exonuclease DIS3L2 of Arabidopsis thaliana (Mouse-ear cress).